The sequence spans 792 residues: Phenylalanine--tRNA ligase beta subunit (792 aa).

The region spanning 38–148 (NTKLAGFIVA…DDYKVGNKFF (111 aa)) is the tRNA-binding domain. One can recognise a B5 domain in the interval 406–482 (EADTKVSFDY…RIYGYDKIKE (77 aa)). The Mg(2+) site is built by D460, D466, E469, and E470. An FDX-ACB domain is found at 698–790 (YKHQSVKRDF…VHKNTGGILR (93 aa)).

Belongs to the phenylalanyl-tRNA synthetase beta subunit family. Type 1 subfamily. Tetramer of two alpha and two beta subunits. Requires Mg(2+) as cofactor.

It is found in the cytoplasm. It carries out the reaction tRNA(Phe) + L-phenylalanine + ATP = L-phenylalanyl-tRNA(Phe) + AMP + diphosphate + H(+). The protein is Phenylalanine--tRNA ligase beta subunit of Wolbachia sp. subsp. Brugia malayi (strain TRS).